The sequence spans 482 residues: Protein DETOXIFICATION 9 (482 aa).

Helical transmembrane passes span Val-32–Leu-49, Ala-64–Phe-84, Phe-111–Met-131, Ile-144–Val-164, Pro-180–Val-200, Gly-209–Met-229, Ala-261–Leu-281, Ser-289–Gly-309, Ala-332–Leu-352, Ile-374–Ile-394, Ile-403–Leu-423, and Trp-435–Phe-455.

Belongs to the multi antimicrobial extrusion (MATE) (TC 2.A.66.1) family.

It is found in the membrane. In Arabidopsis thaliana (Mouse-ear cress), this protein is Protein DETOXIFICATION 9.